Here is a 342-residue protein sequence, read N- to C-terminus: MSRAMGLKINRPRRGSMGVYPRKRAADIVPRVRTWPEVNLGKPTLLGFAAYKAGMLHAVVVEDRPTSPLYGKEVVKAVTVLDAPPLFIWGFRLYTLDPTNGYKRSIAEVWAPELPAYLRRVLTLPEKVDVDKQMKKVEEFKDVAVDVRALVATQPHLSGIGKKTPELLEIPIGGVPSVDERIKFAVSLLGKTVSPKEVFTAGQLVDVIAVTKGKGYQGVIKRFGVTILPRWHKHRKGHRRTGTIGPQAPAVMFTQPRPGQMGFHQRTEYNKRIIKIGDNGAEITPKSGFLHYGVVKGPYILIQGTVPGARKRLVVLRYPVRPPKKAPPAAEPQVVWISSQSI.

The protein belongs to the universal ribosomal protein uL3 family. Part of the 50S ribosomal subunit. Forms a cluster with proteins L14 and L24e.

Functionally, one of the primary rRNA binding proteins, it binds directly near the 3'-end of the 23S rRNA, where it nucleates assembly of the 50S subunit. In Pyrobaculum islandicum (strain DSM 4184 / JCM 9189 / GEO3), this protein is Large ribosomal subunit protein uL3.